The primary structure comprises 253 residues: Spermatogenesis-associated protein 9 (253 aa).

A helical transmembrane segment spans residues 144-166 (LTSIMCASYAALIYLTVCVNAVL). Over residues 210–228 (AKPYRSLPEKPDSISDRPK) the composition is skewed to basic and acidic residues. A disordered region spans residues 210–231 (AKPYRSLPEKPDSISDRPKLPA).

The protein resides in the membrane. Functionally, may play at role in testicular development/spermatogenesis and may be an important factor in male infertility. In Bos taurus (Bovine), this protein is Spermatogenesis-associated protein 9 (SPATA9).